We begin with the raw amino-acid sequence, 232 residues long: Putative KilA-N domain-containing protein 315L (232 aa).

Positions 15–119 constitute a KilA-N domain; the sequence is NFYYGLFRDF…SSASGVVYVV (105 aa).

This Acheta domesticus (House cricket) protein is Putative KilA-N domain-containing protein 315L.